Reading from the N-terminus, the 925-residue chain is Alanine--tRNA ligase (925 aa).

Residues histidine 611, histidine 615, cysteine 714, and histidine 718 each coordinate Zn(2+).

This sequence belongs to the class-II aminoacyl-tRNA synthetase family. The cofactor is Zn(2+).

It is found in the cytoplasm. It carries out the reaction tRNA(Ala) + L-alanine + ATP = L-alanyl-tRNA(Ala) + AMP + diphosphate. Functionally, catalyzes the attachment of alanine to tRNA(Ala) in a two-step reaction: alanine is first activated by ATP to form Ala-AMP and then transferred to the acceptor end of tRNA(Ala). Also edits incorrectly charged Ser-tRNA(Ala) and Gly-tRNA(Ala) via its editing domain. The polypeptide is Alanine--tRNA ligase (Methanosarcina acetivorans (strain ATCC 35395 / DSM 2834 / JCM 12185 / C2A)).